The chain runs to 308 residues: Acetylglutamate kinase (308 aa).

Substrate contacts are provided by residues 73-74 (GG), arginine 95, and asparagine 194.

It belongs to the acetylglutamate kinase family. ArgB subfamily.

The protein localises to the cytoplasm. The catalysed reaction is N-acetyl-L-glutamate + ATP = N-acetyl-L-glutamyl 5-phosphate + ADP. It functions in the pathway amino-acid biosynthesis; L-arginine biosynthesis; N(2)-acetyl-L-ornithine from L-glutamate: step 2/4. Catalyzes the ATP-dependent phosphorylation of N-acetyl-L-glutamate. The polypeptide is Acetylglutamate kinase (Rhodococcus jostii (strain RHA1)).